We begin with the raw amino-acid sequence, 364 residues long: 3-dehydroquinate synthase (364 aa).

Residues 73 to 78, 107 to 111, 131 to 132, lysine 144, lysine 153, and 171 to 174 contribute to the NAD(+) site; these read DGEQNK, GVIGD, TT, and CLCT. Glutamate 186, histidine 249, and histidine 266 together coordinate Zn(2+).

The protein belongs to the sugar phosphate cyclases superfamily. Dehydroquinate synthase family. NAD(+) is required as a cofactor. The cofactor is Co(2+). Zn(2+) serves as cofactor.

The protein localises to the cytoplasm. It catalyses the reaction 7-phospho-2-dehydro-3-deoxy-D-arabino-heptonate = 3-dehydroquinate + phosphate. It functions in the pathway metabolic intermediate biosynthesis; chorismate biosynthesis; chorismate from D-erythrose 4-phosphate and phosphoenolpyruvate: step 2/7. Its function is as follows. Catalyzes the conversion of 3-deoxy-D-arabino-heptulosonate 7-phosphate (DAHP) to dehydroquinate (DHQ). In Blochmanniella floridana, this protein is 3-dehydroquinate synthase.